Consider the following 2259-residue polypeptide: Golgin subfamily A member 4 (2259 aa).

The tract at residues Met1 to Glu54 is disordered. Residue Ser10 is modified to Phosphoserine. Low complexity predominate over residues Glu12–Ser41. Phosphothreonine is present on Thr39. Residues Ser41, Ser104, and Ser111 each carry the phosphoserine modification. The segment at Ser165–Lys235 is interaction with MACF1. Residues Ser167–Ala2182 are a coiled coil. Composition is skewed to basic and acidic residues over residues Leu1932–Glu1946 and Asp1954–Glu1977. Residues Leu1932–Glu1977 form a disordered region. Residues Leu2199–Arg2246 enclose the GRIP domain.

As to quaternary structure, homodimer. Interacts with GTP-bound ARL1 and ARL3. Interacts with MACF1. Directly interacts with TBC1D23. Interacts with FAM91A1; this interaction may be mediated by TBC1D23. As to expression, expressed in the head of epididymal sperm but not in testicular sperm (at protein level).

The protein resides in the cytoplasm. It localises to the golgi apparatus membrane. Its subcellular location is the golgi apparatus. It is found in the trans-Golgi network membrane. Functionally, involved in vesicular trafficking at the Golgi apparatus level. May play a role in delivery of transport vesicles containing GPI-linked proteins from the trans-Golgi network through its interaction with MACF1. Involved in endosome-to-Golgi trafficking. The sequence is that of Golgin subfamily A member 4 from Rattus norvegicus (Rat).